A 133-amino-acid chain; its full sequence is ATP synthase epsilon chain (133 aa).

It belongs to the ATPase epsilon chain family. F-type ATPases have 2 components, CF(1) - the catalytic core - and CF(0) - the membrane proton channel. CF(1) has five subunits: alpha(3), beta(3), gamma(1), delta(1), epsilon(1). CF(0) has three main subunits: a, b and c.

Its subcellular location is the cell membrane. Functionally, produces ATP from ADP in the presence of a proton gradient across the membrane. This chain is ATP synthase epsilon chain (atpC), found in Clostridium acetobutylicum (strain ATCC 824 / DSM 792 / JCM 1419 / IAM 19013 / LMG 5710 / NBRC 13948 / NRRL B-527 / VKM B-1787 / 2291 / W).